The sequence spans 347 residues: NADH-ubiquinone oxidoreductase chain 2 (347 aa).

The next 11 helical transmembrane spans lie at 1-21 (MNPM…FIVT), 25-45 (HWFM…PVLM), 59-79 (YFLT…INLM), 96-116 (MLIT…FWVP), 122-142 (VSLP…LSLL), 149-169 (VNMN…GWGG), 178-198 (IMAY…VYNP), 201-221 (SLLN…LLIF), 237-257 (APII…LPPL), 274-294 (NSVI…FFYM), and 326-346 (MLPL…LILL).

The protein belongs to the complex I subunit 2 family. As to quaternary structure, core subunit of respiratory chain NADH dehydrogenase (Complex I) which is composed of 45 different subunits. Interacts with TMEM242.

The protein resides in the mitochondrion inner membrane. The enzyme catalyses a ubiquinone + NADH + 5 H(+)(in) = a ubiquinol + NAD(+) + 4 H(+)(out). Core subunit of the mitochondrial membrane respiratory chain NADH dehydrogenase (Complex I) that is believed to belong to the minimal assembly required for catalysis. Complex I functions in the transfer of electrons from NADH to the respiratory chain. The immediate electron acceptor for the enzyme is believed to be ubiquinone. The polypeptide is NADH-ubiquinone oxidoreductase chain 2 (Crocidura suaveolens gueldenstaedtii (Gueldenstaedt's shrew)).